The primary structure comprises 456 residues: Bifunctional protein GlmU (456 aa).

Residues 1–229 (MLNSAMSVVI…ISETDGVNNR (229 aa)) are pyrophosphorylase. UDP-N-acetyl-alpha-D-glucosamine contacts are provided by residues 11–14 (LAAG), lysine 25, glutamine 76, 81–82 (GT), 103–105 (YGD), glycine 140, glutamate 154, asparagine 169, and asparagine 227. Aspartate 105 serves as a coordination point for Mg(2+). A Mg(2+)-binding site is contributed by asparagine 227. The linker stretch occupies residues 230–250 (LQLSRLERIYQAEQAEKLLLS). The tract at residues 251–456 (GVMLRDPARF…QGWQRPVKKK (206 aa)) is N-acetyltransferase. UDP-N-acetyl-alpha-D-glucosamine-binding residues include arginine 333 and lysine 351. The active-site Proton acceptor is histidine 363. UDP-N-acetyl-alpha-D-glucosamine-binding residues include tyrosine 366 and asparagine 377. Acetyl-CoA-binding positions include alanine 380, 386–387 (NY), serine 405, alanine 423, and arginine 440.

It in the N-terminal section; belongs to the N-acetylglucosamine-1-phosphate uridyltransferase family. This sequence in the C-terminal section; belongs to the transferase hexapeptide repeat family. As to quaternary structure, homotrimer. The cofactor is Mg(2+).

The protein localises to the cytoplasm. The catalysed reaction is alpha-D-glucosamine 1-phosphate + acetyl-CoA = N-acetyl-alpha-D-glucosamine 1-phosphate + CoA + H(+). The enzyme catalyses N-acetyl-alpha-D-glucosamine 1-phosphate + UTP + H(+) = UDP-N-acetyl-alpha-D-glucosamine + diphosphate. The protein operates within nucleotide-sugar biosynthesis; UDP-N-acetyl-alpha-D-glucosamine biosynthesis; N-acetyl-alpha-D-glucosamine 1-phosphate from alpha-D-glucosamine 6-phosphate (route II): step 2/2. It participates in nucleotide-sugar biosynthesis; UDP-N-acetyl-alpha-D-glucosamine biosynthesis; UDP-N-acetyl-alpha-D-glucosamine from N-acetyl-alpha-D-glucosamine 1-phosphate: step 1/1. It functions in the pathway bacterial outer membrane biogenesis; LPS lipid A biosynthesis. Its function is as follows. Catalyzes the last two sequential reactions in the de novo biosynthetic pathway for UDP-N-acetylglucosamine (UDP-GlcNAc). The C-terminal domain catalyzes the transfer of acetyl group from acetyl coenzyme A to glucosamine-1-phosphate (GlcN-1-P) to produce N-acetylglucosamine-1-phosphate (GlcNAc-1-P), which is converted into UDP-GlcNAc by the transfer of uridine 5-monophosphate (from uridine 5-triphosphate), a reaction catalyzed by the N-terminal domain. This Salmonella typhi protein is Bifunctional protein GlmU.